The chain runs to 786 residues: UPF0313 protein SO_0311 (786 aa).

The 279-residue stretch at 371-649 folds into the Radical SAM core domain; sequence AYDMIKTSIN…KALLRYHDPA (279 aa). Residues Cys385, Cys389, and Cys392 each contribute to the [4Fe-4S] cluster site. 2 disordered regions span residues 669–688 and 698–786; these read NSPN…PKWM and LTRF…QQAK. Composition is skewed to basic and acidic residues over residues 679-688 and 706-717; these read GRNERGPKWM and FDERKGKGDAKG. Residues 718-731 are compositionally biased toward low complexity; that stretch reads KPSASKPKGPKSGA. Over residues 732 to 741 the composition is skewed to polar residues; it reads NAPQSQQPKT.

It belongs to the UPF0313 family. The cofactor is [4Fe-4S] cluster.

This chain is UPF0313 protein SO_0311, found in Shewanella oneidensis (strain ATCC 700550 / JCM 31522 / CIP 106686 / LMG 19005 / NCIMB 14063 / MR-1).